A 308-amino-acid polypeptide reads, in one-letter code: Glycine--tRNA ligase alpha subunit (308 aa).

This sequence belongs to the class-II aminoacyl-tRNA synthetase family. Tetramer of two alpha and two beta subunits.

The protein localises to the cytoplasm. The enzyme catalyses tRNA(Gly) + glycine + ATP = glycyl-tRNA(Gly) + AMP + diphosphate. The sequence is that of Glycine--tRNA ligase alpha subunit from Brucella canis (strain ATCC 23365 / NCTC 10854 / RM-666).